The primary structure comprises 176 residues: ATP-dependent protease subunit HslV (176 aa).

T5 is an active-site residue. Residues S161, C164, and T167 each contribute to the Na(+) site.

Belongs to the peptidase T1B family. HslV subfamily. In terms of assembly, a double ring-shaped homohexamer of HslV is capped on each side by a ring-shaped HslU homohexamer. The assembly of the HslU/HslV complex is dependent on binding of ATP.

Its subcellular location is the cytoplasm. The catalysed reaction is ATP-dependent cleavage of peptide bonds with broad specificity.. Allosterically activated by HslU binding. Its function is as follows. Protease subunit of a proteasome-like degradation complex believed to be a general protein degrading machinery. The polypeptide is ATP-dependent protease subunit HslV (Caldanaerobacter subterraneus subsp. tengcongensis (strain DSM 15242 / JCM 11007 / NBRC 100824 / MB4) (Thermoanaerobacter tengcongensis)).